A 331-amino-acid chain; its full sequence is Biotin synthase (331 aa).

The Radical SAM core domain maps to 52-277 (PDVEVEGIIS…RTMLRFAGGR (226 aa)). Positions 67, 71, and 74 each coordinate [4Fe-4S] cluster. [2Fe-2S] cluster contacts are provided by Cys-110, Cys-143, Cys-202, and Arg-272.

Belongs to the radical SAM superfamily. Biotin synthase family. As to quaternary structure, homodimer. [4Fe-4S] cluster is required as a cofactor. [2Fe-2S] cluster serves as cofactor.

The catalysed reaction is (4R,5S)-dethiobiotin + (sulfur carrier)-SH + 2 reduced [2Fe-2S]-[ferredoxin] + 2 S-adenosyl-L-methionine = (sulfur carrier)-H + biotin + 2 5'-deoxyadenosine + 2 L-methionine + 2 oxidized [2Fe-2S]-[ferredoxin]. It participates in cofactor biosynthesis; biotin biosynthesis; biotin from 7,8-diaminononanoate: step 2/2. In terms of biological role, catalyzes the conversion of dethiobiotin (DTB) to biotin by the insertion of a sulfur atom into dethiobiotin via a radical-based mechanism. In Mycolicibacterium vanbaalenii (strain DSM 7251 / JCM 13017 / BCRC 16820 / KCTC 9966 / NRRL B-24157 / PYR-1) (Mycobacterium vanbaalenii), this protein is Biotin synthase.